The following is a 72-amino-acid chain: Large ribosomal subunit protein uL29 (72 aa).

It belongs to the universal ribosomal protein uL29 family.

This Rhodopirellula baltica (strain DSM 10527 / NCIMB 13988 / SH1) protein is Large ribosomal subunit protein uL29.